Here is a 683-residue protein sequence, read N- to C-terminus: DNA ligase (683 aa).

NAD(+) is bound by residues 35–39, 81–82, and Glu-112; these read DAEYD and SL. The active-site N6-AMP-lysine intermediate is the Lys-114. Arg-135, Glu-170, Lys-277, and Lys-301 together coordinate NAD(+). Residues Cys-395, Cys-398, Cys-411, and Cys-417 each contribute to the Zn(2+) site. The region spanning 601–683 is the BRCT domain; it reads SSNSVLNNKV…YRMINSEVSE (83 aa).

The protein belongs to the NAD-dependent DNA ligase family. LigA subfamily. Mg(2+) is required as a cofactor. Mn(2+) serves as cofactor.

The catalysed reaction is NAD(+) + (deoxyribonucleotide)n-3'-hydroxyl + 5'-phospho-(deoxyribonucleotide)m = (deoxyribonucleotide)n+m + AMP + beta-nicotinamide D-nucleotide.. DNA ligase that catalyzes the formation of phosphodiester linkages between 5'-phosphoryl and 3'-hydroxyl groups in double-stranded DNA using NAD as a coenzyme and as the energy source for the reaction. It is essential for DNA replication and repair of damaged DNA. This is DNA ligase from Wolbachia sp. subsp. Brugia malayi (strain TRS).